We begin with the raw amino-acid sequence, 270 residues long: ATP synthase subunit a (270 aa).

5 helical membrane-spanning segments follow: residues 40–60 (IDSL…FYAV), 98–118 (IAPL…MDLV), 143–163 (DVNI…YYSI), 208–228 (LFGN…MLPW), and 239–259 (AIFH…LTIV).

Belongs to the ATPase A chain family. F-type ATPases have 2 components, CF(1) - the catalytic core - and CF(0) - the membrane proton channel. CF(1) has five subunits: alpha(3), beta(3), gamma(1), delta(1), epsilon(1). CF(0) has three main subunits: a(1), b(2) and c(9-12). The alpha and beta chains form an alternating ring which encloses part of the gamma chain. CF(1) is attached to CF(0) by a central stalk formed by the gamma and epsilon chains, while a peripheral stalk is formed by the delta and b chains.

It is found in the cell inner membrane. Functionally, key component of the proton channel; it plays a direct role in the translocation of protons across the membrane. This chain is ATP synthase subunit a, found in Vibrio vulnificus (strain CMCP6).